The following is a 194-amino-acid chain: dTTP/UTP pyrophosphatase (194 aa).

Asp-66 acts as the Proton acceptor in catalysis.

Belongs to the Maf family. YhdE subfamily. It depends on a divalent metal cation as a cofactor.

It is found in the cytoplasm. It catalyses the reaction dTTP + H2O = dTMP + diphosphate + H(+). It carries out the reaction UTP + H2O = UMP + diphosphate + H(+). Its function is as follows. Nucleoside triphosphate pyrophosphatase that hydrolyzes dTTP and UTP. May have a dual role in cell division arrest and in preventing the incorporation of modified nucleotides into cellular nucleic acids. The protein is dTTP/UTP pyrophosphatase of Anaeromyxobacter dehalogenans (strain 2CP-C).